Reading from the N-terminus, the 463-residue chain is Phosphoglucosamine mutase (463 aa).

The active-site Phosphoserine intermediate is serine 101. Mg(2+) is bound by residues serine 101, aspartate 256, aspartate 258, and aspartate 260. Residue serine 101 is modified to Phosphoserine.

It belongs to the phosphohexose mutase family. The cofactor is Mg(2+). Activated by phosphorylation.

It carries out the reaction alpha-D-glucosamine 1-phosphate = D-glucosamine 6-phosphate. Functionally, catalyzes the conversion of glucosamine-6-phosphate to glucosamine-1-phosphate. This chain is Phosphoglucosamine mutase, found in Desulforapulum autotrophicum (strain ATCC 43914 / DSM 3382 / VKM B-1955 / HRM2) (Desulfobacterium autotrophicum).